Reading from the N-terminus, the 454-residue chain is GTPase Der (454 aa).

2 consecutive EngA-type G domains span residues 4 to 168 and 178 to 352; these read PQVA…PEKD and MKIA…KQAQ. GTP contacts are provided by residues 10–17, 57–61, 120–123, 184–191, 231–235, and 296–299; these read GRPNVGKS, DTGGM, NKAD, GRRNVGKS, DTPGL, and NKWD. Positions 353 to 437 constitute a KH-like domain; it reads SRVSTGELNR…PIKLYMQQRS (85 aa).

The protein belongs to the TRAFAC class TrmE-Era-EngA-EngB-Septin-like GTPase superfamily. EngA (Der) GTPase family. As to quaternary structure, associates with the 50S ribosomal subunit.

In terms of biological role, GTPase that plays an essential role in the late steps of ribosome biogenesis. In Rhodopirellula baltica (strain DSM 10527 / NCIMB 13988 / SH1), this protein is GTPase Der.